We begin with the raw amino-acid sequence, 105 residues long: Large ribosomal subunit protein uL24 (105 aa).

The protein belongs to the universal ribosomal protein uL24 family. Part of the 50S ribosomal subunit.

Its function is as follows. One of two assembly initiator proteins, it binds directly to the 5'-end of the 23S rRNA, where it nucleates assembly of the 50S subunit. In terms of biological role, one of the proteins that surrounds the polypeptide exit tunnel on the outside of the subunit. This is Large ribosomal subunit protein uL24 from Anaplasma marginale (strain St. Maries).